A 295-amino-acid polypeptide reads, in one-letter code: Biliverdin reductase A (295 aa).

Positions 1–2 (MS) are excised as a propeptide. NAD(+)-binding positions include 18 to 19 (RA), 76 to 79 (SSSH), and Tyr-97. Ser-154 is modified (phosphoserine). NAD(+) is bound at residue Ser-167. Thr-173 is subject to Phosphothreonine. Phosphoserine occurs at positions 177 and 229. Residues Lys-247 and Lys-252 each carry the N6-acetyllysine modification. Positions 279, 280, 291, and 292 each coordinate Zn(2+).

It belongs to the Gfo/Idh/MocA family. Biliverdin reductase subfamily. In terms of assembly, monomer. Zn(2+) serves as cofactor.

The protein localises to the cytoplasm. It is found in the cytosol. It catalyses the reaction (4Z,15Z)-bilirubin IXalpha + NAD(+) = biliverdin IXalpha + NADH + H(+). It carries out the reaction (4Z,15Z)-bilirubin IXalpha + NADP(+) = biliverdin IXalpha + NADPH + H(+). Its pathway is porphyrin-containing compound metabolism; protoheme degradation. Its function is as follows. Reduces the gamma-methene bridge of the open tetrapyrrole, biliverdin IXalpha, to bilirubin with the concomitant oxidation of a NADH or NADPH cofactor. Does not reduce bilirubin IXbeta. Uses the reactants NADH or NADPH depending on the pH; NADH is used at the acidic pH range (6-6.9) and NADPH at the alkaline range (8.5-8.7). NADPH, however, is the probable reactant in biological systems. The polypeptide is Biliverdin reductase A (Mus musculus (Mouse)).